Here is a 394-residue protein sequence, read N- to C-terminus: S-adenosylmethionine synthase 1 (394 aa).

Residue glutamate 11 participates in Mg(2+) binding. Residue histidine 17 coordinates ATP. Position 45 (glutamate 45) interacts with K(+). Residues glutamate 58 and glutamine 101 each coordinate L-methionine. ATP-binding positions include 169-171 (DGK), 237-240 (SGRF), aspartate 248, 254-255 (RK), alanine 271, lysine 275, and lysine 279. Aspartate 248 provides a ligand contact to L-methionine. Lysine 279 is an L-methionine binding site.

It belongs to the AdoMet synthase family. In terms of assembly, homotetramer. Mn(2+) serves as cofactor. The cofactor is Mg(2+). Requires Co(2+) as cofactor. It depends on K(+) as a cofactor.

The protein localises to the cytoplasm. It catalyses the reaction L-methionine + ATP + H2O = S-adenosyl-L-methionine + phosphate + diphosphate. Its pathway is amino-acid biosynthesis; S-adenosyl-L-methionine biosynthesis; S-adenosyl-L-methionine from L-methionine: step 1/1. Functionally, catalyzes the formation of S-adenosylmethionine from methionine and ATP. The reaction comprises two steps that are both catalyzed by the same enzyme: formation of S-adenosylmethionine (AdoMet) and triphosphate, and subsequent hydrolysis of the triphosphate. The sequence is that of S-adenosylmethionine synthase 1 (SAMS1) from Triticum monococcum (Einkorn wheat).